We begin with the raw amino-acid sequence, 1104 residues long: Ankyrin repeat- and BTB/POZ domain-containing protein 3 (1104 aa).

A helical membrane pass occupies residues 168-188 (IVLSWGLAAHCTAAALAALSL). The segment at 260-301 (SCSGPGSGSGSGPGPSSGPGAAPAADKEREAPGGGAASGGAC) is disordered. Over residues 264–276 (PGSGSGSGPGPSS) the composition is skewed to gly residues. ANK repeat units lie at residues 603–632 (QGMT…DLNV), 649–678 (RHWT…KVEG), 687–716 (YSET…DPLI), 730–759 (GDMN…KEKS), and 825–854 (TWLE…TIQE). The BTB domain maps to 923–989 (SDVTFLVEGR…LYYGGPESLL (67 aa)).

It is found in the membrane. The polypeptide is Ankyrin repeat- and BTB/POZ domain-containing protein 3 (Homo sapiens (Human)).